A 157-amino-acid chain; its full sequence is Arginine repressor (157 aa).

This sequence belongs to the ArgR family.

Its subcellular location is the cytoplasm. Its pathway is amino-acid biosynthesis; L-arginine biosynthesis [regulation]. Regulates arginine biosynthesis genes. The protein is Arginine repressor of Bacteroides fragilis (strain ATCC 25285 / DSM 2151 / CCUG 4856 / JCM 11019 / LMG 10263 / NCTC 9343 / Onslow / VPI 2553 / EN-2).